The sequence spans 231 residues: Small ribosomal subunit protein uS2 (231 aa).

The protein belongs to the universal ribosomal protein uS2 family.

In Blochmanniella floridana, this protein is Small ribosomal subunit protein uS2.